A 477-amino-acid chain; its full sequence is PTS system MurNAc-GlcNAc-specific EIIBC component (477 aa).

In terms of domain architecture, PTS EIIB type-1 spans 5 to 87; that stretch reads QQLAHHILDA…VKLSGVQLGE (83 aa). Cys-27 (phosphocysteine intermediate; for EIIB activity) is an active-site residue. The segment at 91–113 is disordered; sequence HRSNTSNIKNQAQQNKREFQQKR. Residues 92–104 show a composition bias toward polar residues; sequence RSNTSNIKNQAQQ. One can recognise a PTS EIIC type-1 domain in the interval 123–477; sequence KSIANIFIPL…EMRNLNKLGD (355 aa). Transmembrane regions (helical) follow at residues 128 to 148, 167 to 187, 192 to 212, 227 to 247, 267 to 287, 298 to 318, 342 to 362, 377 to 397, 401 to 421, and 443 to 463; these read IFIPLIPAFIGAGLIGGIAAV, VAVLNVIKDGMLAYLAIFTGF, VFGATPGLGGVIGGTTLLTGI, LIAGQGGIIGVILAVWLLSII, ISLLIIGLLTIFFFMPIAGFI, VIGVGGIFSGFIIGAFFLPLV, LLPIAAMAGAGQVGAALALWV, ALPVGFLGIGEPLIYGVTLPL, FITACLGGGIGGAVIGGIGHI, and LGYIIGLLSAYLAGFIFTYFF.

The protein localises to the cell membrane. It carries out the reaction N-acetyl-beta-D-muramate-(1-&gt;4)-N-acetyl-D-glucosamine(out) + N(pros)-phospho-L-histidyl-[protein] = 6-phospho-N-acetyl-beta-D-muramate-(1-&gt;4)-N-acetyl-D-glucosamine(in) + L-histidyl-[protein]. The protein operates within cell wall biogenesis; peptidoglycan recycling. The phosphoenolpyruvate-dependent sugar phosphotransferase system (sugar PTS), a major carbohydrate active transport system, catalyzes the phosphorylation of incoming sugar substrates concomitantly with their translocation across the cell membrane. This system is involved in the uptake and phosphorylation of MurNAc-GlcNAc, the principle peptidoglycan turnover product of S.aureus, yielding cytoplasmic MurNAc 6P-GlcNAc. The protein is PTS system MurNAc-GlcNAc-specific EIIBC component of Staphylococcus haemolyticus (strain JCSC1435).